The sequence spans 340 residues: UDP-3-O-(3-hydroxymyristoyl)glucosamine N-acyltransferase (340 aa).

H239 serves as the catalytic Proton acceptor.

Belongs to the transferase hexapeptide repeat family. LpxD subfamily. In terms of assembly, homotrimer.

The enzyme catalyses a UDP-3-O-[(3R)-3-hydroxyacyl]-alpha-D-glucosamine + a (3R)-hydroxyacyl-[ACP] = a UDP-2-N,3-O-bis[(3R)-3-hydroxyacyl]-alpha-D-glucosamine + holo-[ACP] + H(+). The catalysed reaction is UDP-3-O-[(3R)-3-hydroxytetradecanoyl]-alpha-D-glucosamine + (3R)-hydroxytetradecanoyl-[ACP] = UDP-2-N,3-O-bis[(3R)-3-hydroxytetradecanoyl]-alpha-D-glucosamine + holo-[ACP] + H(+). Its pathway is glycolipid biosynthesis; lipid IV(A) biosynthesis; lipid IV(A) from (3R)-3-hydroxytetradecanoyl-[acyl-carrier-protein] and UDP-N-acetyl-alpha-D-glucosamine: step 3/6. In terms of biological role, catalyzes the N-acylation of UDP-3-O-(hydroxytetradecanoyl)glucosamine using 3-hydroxytetradecanoyl-ACP as the acyl donor. Is involved in the biosynthesis of lipid A, a phosphorylated glycolipid that anchors the lipopolysaccharide to the outer membrane of the cell. This Pectobacterium atrosepticum (strain SCRI 1043 / ATCC BAA-672) (Erwinia carotovora subsp. atroseptica) protein is UDP-3-O-(3-hydroxymyristoyl)glucosamine N-acyltransferase.